The following is a 303-amino-acid chain: Monoglyceride lipase (303 aa).

Thr10 is subject to Phosphothreonine. Tyr58 bears the 3'-nitrotyrosine mark. Ser122 serves as the catalytic Nucleophile. Residues Asp239 and His269 each act as charge relay system in the active site.

It belongs to the AB hydrolase superfamily. Monoacylglycerol lipase family. In terms of assembly, homodimer. As to expression, detected in adipose tissue, lung, liver, kidney, brain and heart.

Its subcellular location is the cytoplasm. The protein resides in the cytosol. The protein localises to the membrane. It catalyses the reaction Hydrolyzes glycerol monoesters of long-chain fatty acids.. The enzyme catalyses a 1-acylglycerol + H2O = glycerol + a fatty acid + H(+). The catalysed reaction is a 2-acylglycerol + H2O = glycerol + a fatty acid + H(+). It carries out the reaction 1-octanoylglycerol + H2O = octanoate + glycerol + H(+). It catalyses the reaction 2-(5Z,8Z,11Z,14Z-eicosatetraenoyl)-glycerol + H2O = glycerol + (5Z,8Z,11Z,14Z)-eicosatetraenoate + H(+). The enzyme catalyses 1-decanoylglycerol + H2O = decanoate + glycerol + H(+). The catalysed reaction is 1-dodecanoylglycerol + H2O = dodecanoate + glycerol + H(+). It carries out the reaction 1-tetradecanoylglycerol + H2O = tetradecanoate + glycerol + H(+). It catalyses the reaction 2-hexadecanoylglycerol + H2O = glycerol + hexadecanoate + H(+). The enzyme catalyses 1-(9Z-octadecenoyl)-glycerol + H2O = glycerol + (9Z)-octadecenoate + H(+). The catalysed reaction is 2-(9Z-octadecenoyl)-glycerol + H2O = glycerol + (9Z)-octadecenoate + H(+). It carries out the reaction 2-(9Z,12Z-octadecadienoyl)-glycerol + H2O = (9Z,12Z)-octadecadienoate + glycerol + H(+). It catalyses the reaction 1-(5Z,8Z,11Z,14Z-eicosatetraenoyl)-glycerol + H2O = glycerol + (5Z,8Z,11Z,14Z)-eicosatetraenoate + H(+). The enzyme catalyses 1-(9Z,12Z-octadecadienoyl)-glycerol + H2O = (9Z,12Z)-octadecadienoate + glycerol + H(+). The catalysed reaction is 1-hexadecanoylglycerol + H2O = glycerol + hexadecanoate + H(+). It carries out the reaction 1-octadecanoylglycerol + H2O = octadecanoate + glycerol + H(+). It catalyses the reaction prostaglandin E2 1-glyceryl ester + H2O = prostaglandin E2 + glycerol + H(+). The enzyme catalyses prostaglandin D2-1-glycerol ester + H2O = prostaglandin D2 + glycerol + H(+). The catalysed reaction is 2-glyceryl-15-deoxy-Delta(12,14)-prostaglandin J2 + H2O = 15-deoxy-Delta(12,14)-prostaglandin J2 + glycerol + H(+). It carries out the reaction prostaglandin F2alpha 1-glyceryl ester + H2O = prostaglandin F2alpha + glycerol + H(+). The protein operates within glycerolipid metabolism; triacylglycerol degradation. Converts monoacylglycerides to free fatty acids and glycerol. Hydrolyzes the endocannabinoid 2-arachidonoylglycerol, and thereby contributes to the regulation of endocannabinoid signaling, nociperception and perception of pain. Regulates the levels of fatty acids that serve as signaling molecules and promote cancer cell migration, invasion and tumor growth. This Homo sapiens (Human) protein is Monoglyceride lipase.